The sequence spans 154 residues: Large ribosomal subunit protein uL13 (154 aa).

Belongs to the universal ribosomal protein uL13 family. As to quaternary structure, part of the 50S ribosomal subunit.

This protein is one of the early assembly proteins of the 50S ribosomal subunit, although it is not seen to bind rRNA by itself. It is important during the early stages of 50S assembly. This chain is Large ribosomal subunit protein uL13, found in Rhodospirillum rubrum (strain ATCC 11170 / ATH 1.1.1 / DSM 467 / LMG 4362 / NCIMB 8255 / S1).